We begin with the raw amino-acid sequence, 234 residues long: tRNA (guanine-N(1)-)-methyltransferase (234 aa).

S-adenosyl-L-methionine contacts are provided by residues Gly-110 and 134 to 139 (IGDYVL).

Belongs to the RNA methyltransferase TrmD family. As to quaternary structure, homodimer.

Its subcellular location is the cytoplasm. The catalysed reaction is guanosine(37) in tRNA + S-adenosyl-L-methionine = N(1)-methylguanosine(37) in tRNA + S-adenosyl-L-homocysteine + H(+). Its function is as follows. Specifically methylates guanosine-37 in various tRNAs. The chain is tRNA (guanine-N(1)-)-methyltransferase from Tropheryma whipplei (strain Twist) (Whipple's bacillus).